We begin with the raw amino-acid sequence, 314 residues long: Mitochondrial RNA-splicing protein MRS3 (314 aa).

Solcar repeat units follow at residues 31-118 (APLY…CKKN), 128-210 (HHPF…STKF), and 217-310 (YNPL…AKHF). The next 6 helical transmembrane spans lie at 33–52 (LYHQLIAGAFAGIMEHSVMF), 93–112 (GVQSVILGAGPAHAVYFGTY), 130–149 (PFKTAISGACATTASDALMN), 185–204 (SYPTTLVMNIPFAAFNFVIY), 219–238 (PLIHCLCGSISGSTCAAITT), and 285–298 (GWKPRIVANMPATA).

The protein belongs to the mitochondrial carrier (TC 2.A.29) family.

Its subcellular location is the mitochondrion inner membrane. In terms of biological role, MRS3 suppresses a mitochondrial splice defect in the first intron of the COB gene. It may act as a carrier, exerting its suppressor activity via modulation of solute concentrations in the mitochondrion (possibly of cations). The polypeptide is Mitochondrial RNA-splicing protein MRS3 (MRS3) (Saccharomyces cerevisiae (strain ATCC 204508 / S288c) (Baker's yeast)).